Consider the following 134-residue polypeptide: MGKDTIADIITSIRNADMNRKGMVRIESTNITESIVKILLREGFVENVRKHRENNHYFLILTLRHRRNKKESYKTFLNLKRISRPGLRIYSNSQRIPRILGGIGIVILSTSQGIMTDREARLKKIGGEILCYIW.

The protein belongs to the universal ribosomal protein uS8 family. In terms of assembly, part of the 30S ribosomal subunit.

The protein localises to the plastid. Its subcellular location is the chloroplast. One of the primary rRNA binding proteins, it binds directly to 16S rRNA central domain where it helps coordinate assembly of the platform of the 30S subunit. This chain is Small ribosomal subunit protein uS8c (rps8), found in Draba nemorosa (Woodland whitlowgrass).